Reading from the N-terminus, the 827-residue chain is Transcription factor SOX-6 (827 aa).

A compositionally biased stretch (polar residues) spans 1–10 (MSSKQATSPF). The tract at residues 1-51 (MSSKQATSPFACTVDGEETMTQDLTSREKEEGSDQHPASHLPLHPIMHNKP) is disordered. Over residues 25–34 (TSREKEEGSD) the composition is skewed to basic and acidic residues. Threonine 119 carries the post-translational modification Phosphothreonine. Residues 184–257 (LAEKERQLST…QHKINLLQQQ (74 aa)) are a coiled coil. Disordered stretches follow at residues 329–360 (HVSH…GGHS) and 380–470 (SPGA…PIGG). A compositionally biased stretch (basic and acidic residues) spans 341–357 (GISDRLGRNLDPYEHGG). A Phosphoserine modification is found at serine 399. Threonine 401 is subject to Phosphothreonine. Glycyl lysine isopeptide (Lys-Gly) (interchain with G-Cter in SUMO) cross-links involve residues lysine 404 and lysine 417. 2 stretches are compositionally biased toward polar residues: residues 421–431 (TAQPLNLSSRP) and 439–461 (SPTS…LPNK). Serine 439 and serine 442 each carry phosphoserine. Positions 620–688 (IKRPMNAFMV…IHLEKYPNYK (69 aa)) form a DNA-binding region, HMG box. 2 disordered regions span residues 752–772 (TPSP…EPSL) and 786–827 (ASLA…VSAN). The segment covering 795-808 (NGEDEMEAYDDYED) has biased composition (acidic residues).

In terms of assembly, homodimer. Interacts with DAZAP2. May interact with CENPK. In terms of processing, sumoylation inhibits the transcriptional activity.

It is found in the nucleus. Its subcellular location is the cytoplasm. Its function is as follows. Transcription factor that plays a key role in several developmental processes, including neurogenesis, chondrocytes differentiation and cartilage formation. Specifically binds the 5'-AACAAT-3' DNA motif present in enhancers and super-enhancers and promotes expression of genes important for chondrogenesis. Required for overt chondrogenesis when condensed prechondrocytes differentiate into early stage chondrocytes: SOX5 and SOX6 cooperatively bind with SOX9 on active enhancers and super-enhancers associated with cartilage-specific genes, and thereby potentiate SOX9's ability to transactivate. Not involved in precartilaginous condensation, the first step in chondrogenesis, during which skeletal progenitors differentiate into prechondrocytes. Together with SOX5, required to form and maintain a pool of highly proliferating chondroblasts between epiphyses and metaphyses, to form columnar chondroblasts, delay chondrocyte prehypertrophy but promote hypertrophy, and to delay terminal differentiation of chondrocytes on contact with ossification fronts. Binds to the proximal promoter region of the myelin protein MPZ gene, and is thereby involved in the differentiation of oligodendroglia in the developing spinal tube. Binds to the gene promoter of MBP and acts as a transcriptional repressor. The polypeptide is Transcription factor SOX-6 (Rattus norvegicus (Rat)).